We begin with the raw amino-acid sequence, 296 residues long: GTPase Era (296 aa).

In terms of domain architecture, Era-type G spans His-7–Glu-174. The tract at residues Gly-15 to Ser-22 is G1. Position 15–22 (Gly-15–Ser-22) interacts with GTP. The G2 stretch occupies residues Gln-41–His-45. The tract at residues Asp-62–Gly-65 is G3. GTP contacts are provided by residues Asp-62–Phe-66 and Asn-123–Asp-126. Residues Asn-123–Asp-126 are G4. Residues Val-153–Ala-155 are G5. One can recognise a KH type-2 domain in the interval Leu-205–Ser-281.

The protein belongs to the TRAFAC class TrmE-Era-EngA-EngB-Septin-like GTPase superfamily. Era GTPase family. Monomer.

It localises to the cytoplasm. It is found in the cell inner membrane. Functionally, an essential GTPase that binds both GDP and GTP, with rapid nucleotide exchange. Plays a role in 16S rRNA processing and 30S ribosomal subunit biogenesis and possibly also in cell cycle regulation and energy metabolism. The sequence is that of GTPase Era from Chromobacterium violaceum (strain ATCC 12472 / DSM 30191 / JCM 1249 / CCUG 213 / NBRC 12614 / NCIMB 9131 / NCTC 9757 / MK).